Reading from the N-terminus, the 261-residue chain is Ribonuclease HII (261 aa).

The RNase H type-2 domain occupies 71–259 (KYIAGVDEVG…VKEAKLHFDS (189 aa)). 3 residues coordinate a divalent metal cation: aspartate 77, glutamate 78, and aspartate 169.

Belongs to the RNase HII family. It depends on Mn(2+) as a cofactor. Mg(2+) is required as a cofactor.

It localises to the cytoplasm. It catalyses the reaction Endonucleolytic cleavage to 5'-phosphomonoester.. Functionally, endonuclease that specifically degrades the RNA of RNA-DNA hybrids. The protein is Ribonuclease HII of Listeria monocytogenes serotype 4a (strain HCC23).